The chain runs to 255 residues: MEDKQAKPLRILLSNDDGVFAEGIRTLASELRTLAEVIIVAPDRNRSGASNSLTLEQPLRVTCVEENVYSVQGTPTDCVHFALNELLKNDLPDLVLSGINHGANLGDDVLYSGTVAAAMEGHFLGVQSIAFSLVGKTHFKTAATIAKRIVEQHLAKPIPTNRLLNINIPDLPLEQLEEIRVTRLGARHHAENMIKQLDPRGHEIYWLGPPGKEQDAGEGTDFHAIEQGYVSITPLQVDLTAHESLRAMDTWLKEK.

Positions 16, 17, 47, and 100 each coordinate a divalent metal cation.

It belongs to the SurE nucleotidase family. The cofactor is a divalent metal cation.

It is found in the cytoplasm. The catalysed reaction is a ribonucleoside 5'-phosphate + H2O = a ribonucleoside + phosphate. Nucleotidase that shows phosphatase activity on nucleoside 5'-monophosphates. The sequence is that of 5'-nucleotidase SurE from Vibrio vulnificus (strain CMCP6).